A 192-amino-acid chain; its full sequence is Adenylate kinase (192 aa).

12–17 lines the ATP pocket; the sequence is GSGKTT. The NMP stretch occupies residues 34-63; the sequence is STGDLLRAEVASGSELGQTIKSYIDNGNLV. Residues Thr35, Arg40, 61-63, 88-91, and Gln95 contribute to the AMP site; these read NLV and GFPR. The interval 130-136 is LID; sequence GRARGAD. Arg131 serves as a coordination point for ATP. Residues Arg133 and Arg145 each contribute to the AMP site. Arg173 is an ATP binding site.

The protein belongs to the adenylate kinase family. In terms of assembly, monomer.

The protein localises to the cytoplasm. It catalyses the reaction AMP + ATP = 2 ADP. It participates in purine metabolism; AMP biosynthesis via salvage pathway; AMP from ADP: step 1/1. Its function is as follows. Catalyzes the reversible transfer of the terminal phosphate group between ATP and AMP. Plays an important role in cellular energy homeostasis and in adenine nucleotide metabolism. The chain is Adenylate kinase from Nautilia profundicola (strain ATCC BAA-1463 / DSM 18972 / AmH).